A 399-amino-acid chain; its full sequence is Yellow-related salivary protein M10 (399 aa).

A signal peptide spans 1–18; the sequence is MKFILSVLALASFQHVFC. Residues asparagine 29 and asparagine 83 are each glycosylated (N-linked (GlcNAc...) asparagine).

It belongs to the major royal jelly protein family. Salivary gland (at protein level).

It is found in the secreted. Its function is as follows. Probably modulates blood feeding of sand flies on vertebrate species by binding and sequestering different mediators involved in the host response. Functions as a chemoattractant for host neutrophils; likely acts through a G-protein-coupled receptor and effect is dependent on calcium influx and phosphatidylinositol 3-kinases (PI3K) activity. In terms of biological role, (Microbial infection) Probably enhances infection caused by Leishmania species in the host through augmentation of host neutrophil recruitment into the skin. The polypeptide is Yellow-related salivary protein M10 (Phlebotomus duboscqi (Sandfly)).